A 103-amino-acid polypeptide reads, in one-letter code: uncharacterized protein (103 aa).

This is an uncharacterized protein from Homo sapiens (Human).